Reading from the N-terminus, the 420-residue chain is Serine protease inhibitor A3B (420 aa).

The signal sequence occupies residues 1–17; it reads MAFIAALGLLMAEICPA. Residues N104 and N349 are each glycosylated (N-linked (GlcNAc...) asparagine). An RCL region spans residues 367-392; that stretch reads GTEGDAITIVGYNFMSAKLKPVFVKF.

It belongs to the serpin family.

The protein resides in the secreted. This is Serine protease inhibitor A3B (Serpina3b) from Mus musculus (Mouse).